Reading from the N-terminus, the 237-residue chain is MOB kinase activator 2 (237 aa).

The segment at 1–21 (MDWLMGKSKAKPNGKKPAAEE) is disordered. Residues C78, C83, H157, and H162 each coordinate Zn(2+). Positions 217–229 (GGSGDGAGSGGPG) are enriched in gly residues. The tract at residues 217-237 (GGSGDGAGSGGPGAQNHVKER) is disordered.

This sequence belongs to the MOB1/phocein family. Binds STK38 and STK38L. Post-translationally, phosphorylated.

The protein resides in the nucleus. It is found in the cytoplasm. It localises to the perinuclear region. Stimulates the autophosphorylation and kinase activity of STK38 and STK38L. The protein is MOB kinase activator 2 (MOB2) of Homo sapiens (Human).